The sequence spans 541 residues: Metal transporter Nramp6 (541 aa).

Low complexity predominate over residues 1–18 (MAPLPAAATATASSAATP). Positions 1 to 44 (MAPLPAAATATASSAATPADDEAHSLLPSTPSNEEDDDDLEERA) are disordered. The next 12 membrane-spanning stretches (helical) occupy residues 87-107 (LWLFTGPGFLMSIAFLDPGNL), 120-140 (TLLWLLLWATSMGLLVQLLAA), 172-192 (VAMVGADIQEVIGSAIAIKIL), 196-216 (FLPLWAGVVITALDCFIFLSL), 224-244 (LEAVFAILIATMAVSFAWMFT), 270-290 (AVGVVGCVIMPHNVFLHSALV), 316-336 (IALAVSFMINLFVTTVFAKGF), 358-378 (FGGGFFPILYIWGIGLLAAGQ), 404-424 (IRSLITRSFAIVPTIIVALFF), 436-456 (WLNVLQSIQIPFALIPLITLV), 474-494 (VTWTVATLLITINGYLLLDFF), and 502-522 (LSGSILCVAVLAYASFVLYLI).

It belongs to the NRAMP (TC 2.A.55) family.

The protein localises to the membrane. Its function is as follows. Probable metal transporter. This is Metal transporter Nramp6 (NRAMP6) from Oryza sativa subsp. japonica (Rice).